Here is a 154-residue protein sequence, read N- to C-terminus: MALLLSVLRVLLGGFFALVGLAKLSEEISAPVSERMNALFVQFAEVFPLKVFGYQPDPLNYQIAVGFLELLAGLLLVMGPPMLQEISNLFLILLMMGAIFTLAALKESLSTCIPAIVCLGFLLLLNVGQLLAQTKKVVRPTRKKTLSTFKESWK.

The signal sequence occupies residues Met-1 to Ala-22. A run of 3 helical transmembrane segments spans residues Ile-63–Leu-83, Glu-85–Leu-105, and Cys-112–Ala-132.

The protein belongs to the DoxX family.

It localises to the membrane. This Homo sapiens (Human) protein is Transmembrane protein 35B.